The following is a 232-amino-acid chain: Flagellar L-ring protein (232 aa).

Residues 1-21 form the signal peptide; sequence MQKNAAHTYAISSLLVLSLTG. The N-palmitoyl cysteine moiety is linked to residue C22. The S-diacylglycerol cysteine moiety is linked to residue C22.

Belongs to the FlgH family. As to quaternary structure, the basal body constitutes a major portion of the flagellar organelle and consists of four rings (L,P,S, and M) mounted on a central rod.

It is found in the cell outer membrane. Its subcellular location is the bacterial flagellum basal body. In terms of biological role, assembles around the rod to form the L-ring and probably protects the motor/basal body from shearing forces during rotation. The protein is Flagellar L-ring protein of Escherichia coli O6:H1 (strain CFT073 / ATCC 700928 / UPEC).